The following is a 504-amino-acid chain: Peptidyl-prolyl cis-trans isomerase CYP57 (504 aa).

An N-acetylserine modification is found at serine 2. The PPIase cyclophilin-type domain occupies 16-167 (IVNTTHGPID…DPAPKILSVE (152 aa)). A coiled-coil region spans residues 204–274 (NLLSFGEEAE…AKKEAAQKDK (71 aa)). 3 stretches are compositionally biased toward basic and acidic residues: residues 237–275 (RLLKAEASDKERNASESKEVLSVREALNAKKEAAQKDKS), 344–354 (EDEKPRMEKLS), and 364–374 (AKAEHMEKGDT). Disordered stretches follow at residues 237-374 (RLLK…KGDT), 416-441 (AKPFTSSNEPVVLTSSSEPVDNKEED), and 482-504 (EKFNRMQAKQKRREREWSGKSLA). Polar residues predominate over residues 416-434 (AKPFTSSNEPVVLTSSSEP). The span at 494-504 (REREWSGKSLA) shows a compositional bias: basic and acidic residues.

The protein belongs to the cyclophilin-type PPIase family. Ubiquitous.

The protein localises to the nucleus. Its subcellular location is the cytoplasm. The catalysed reaction is [protein]-peptidylproline (omega=180) = [protein]-peptidylproline (omega=0). Functionally, PPIases accelerate the folding of proteins. It catalyzes the cis-trans isomerization of proline imidic peptide bonds in oligopeptides. Involved in plant response to pathogen infection by increasing PAD4 expression in absence of EDS1 up-regulation. The protein is Peptidyl-prolyl cis-trans isomerase CYP57 (CYP57) of Arabidopsis thaliana (Mouse-ear cress).